A 658-amino-acid polypeptide reads, in one-letter code: Cysteine-rich receptor-like protein kinase 36 (658 aa).

A signal peptide spans 1–26 (MERSNLFHIPCFLLLFLLFNINGVHT). Gnk2-homologous domains lie at 27–128 (TFVC…NIHR) and 139–246 (NVPH…DYRF). Over 27–281 (TFVCGDEDFS…KKGRMFQPWS (255 aa)) the chain is Extracellular. Residues Asn38, Asn64, Asn116, Asn150, and Asn163 are each glycosylated (N-linked (GlcNAc...) asparagine). Residues 282–302 (VVVVVFPTGINLAVFVAFVLA) form a helical membrane-spanning segment. Over 303-658 (YRRMRRRIYT…EVSITVLYPR (356 aa)) the chain is Cytoplasmic. The Protein kinase domain maps to 340–612 (FSLENKLGQG…ITWLARDGTF (273 aa)). ATP is bound by residues 346–354 (LGQGGFGSV) and Lys368. The residue at position 413 (Tyr413) is a Phosphotyrosine. The active-site Proton acceptor is the Asp465. Phosphoserine is present on Ser469. Thr505 carries the post-translational modification Phosphothreonine. Position 513 is a phosphotyrosine (Tyr513).

Belongs to the protein kinase superfamily. Ser/Thr protein kinase family. CRK subfamily. As to quaternary structure, interacts with CRK45. Autophosphorylated.

It localises to the cell membrane. It carries out the reaction L-seryl-[protein] + ATP = O-phospho-L-seryl-[protein] + ADP + H(+). The enzyme catalyses L-threonyl-[protein] + ATP = O-phospho-L-threonyl-[protein] + ADP + H(+). Forms a complex with CRK45 that may negatively control abscisic acid (ABA) and osmotic stress signal transduction. Can phosphorylate CRK45 in vitro. This chain is Cysteine-rich receptor-like protein kinase 36, found in Arabidopsis thaliana (Mouse-ear cress).